A 63-amino-acid chain; its full sequence is Large ribosomal subunit protein uL29 (63 aa).

The protein belongs to the universal ribosomal protein uL29 family.

This is Large ribosomal subunit protein uL29 from Shewanella denitrificans (strain OS217 / ATCC BAA-1090 / DSM 15013).